The chain runs to 160 residues: Major strawberry allergen Fra a 1-B (160 aa).

Belongs to the BetVI family. Monomer.

This is Major strawberry allergen Fra a 1-B from Fragaria ananassa (Strawberry).